Here is a 175-residue protein sequence, read N- to C-terminus: Ribosome maturation factor RimM (175 aa).

One can recognise a PRC barrel domain in the interval 100–173; it reads EGEYYFHEII…IIIIRPMEGL (74 aa).

Belongs to the RimM family. As to quaternary structure, binds ribosomal protein uS19.

It localises to the cytoplasm. In terms of biological role, an accessory protein needed during the final step in the assembly of 30S ribosomal subunit, possibly for assembly of the head region. Essential for efficient processing of 16S rRNA. May be needed both before and after RbfA during the maturation of 16S rRNA. It has affinity for free ribosomal 30S subunits but not for 70S ribosomes. This is Ribosome maturation factor RimM from Geobacillus thermodenitrificans (strain NG80-2).